A 400-amino-acid chain; its full sequence is Nicotinate phosphoribosyltransferase (400 aa).

Residue His-220 is modified to Phosphohistidine; by autocatalysis.

This sequence belongs to the NAPRTase family. Transiently phosphorylated on a His residue during the reaction cycle. Phosphorylation strongly increases the affinity for substrates and increases the rate of nicotinate D-ribonucleotide production. Dephosphorylation regenerates the low-affinity form of the enzyme, leading to product release.

It carries out the reaction nicotinate + 5-phospho-alpha-D-ribose 1-diphosphate + ATP + H2O = nicotinate beta-D-ribonucleotide + ADP + phosphate + diphosphate. It functions in the pathway cofactor biosynthesis; NAD(+) biosynthesis; nicotinate D-ribonucleotide from nicotinate: step 1/1. Its function is as follows. Catalyzes the synthesis of beta-nicotinate D-ribonucleotide from nicotinate and 5-phospho-D-ribose 1-phosphate at the expense of ATP. The polypeptide is Nicotinate phosphoribosyltransferase (Salmonella newport (strain SL254)).